We begin with the raw amino-acid sequence, 185 residues long: UPF0669 protein C6orf120 homolog (185 aa).

An N-terminal signal peptide occupies residues 1-23 (MAARWRRILIVFVAAQVLCLVNT). A glycan (N-linked (GlcNAc...) asparagine) is linked at asparagine 47.

The protein belongs to the UPF0669 family.

The protein resides in the secreted. This is UPF0669 protein C6orf120 homolog from Gallus gallus (Chicken).